The sequence spans 145 residues: MIALIQRVSQAKVDVDGVTIGAIDKGLLVLLGVEREDDLAKMEKLATKVMSYRVFSDENGKMNLNLEQAGGSLLVVSQFTLAADTGRGLRPSFSGAGTPDQAKTLYDAFVEFCKAKGVTTQTGEFAADMQVSLVNDGPVTFNLQV.

The short motif at 137–138 (GP) is the Gly-cisPro motif, important for rejection of L-amino acids element.

It belongs to the DTD family. In terms of assembly, homodimer.

Its subcellular location is the cytoplasm. The enzyme catalyses glycyl-tRNA(Ala) + H2O = tRNA(Ala) + glycine + H(+). The catalysed reaction is a D-aminoacyl-tRNA + H2O = a tRNA + a D-alpha-amino acid + H(+). Its function is as follows. An aminoacyl-tRNA editing enzyme that deacylates mischarged D-aminoacyl-tRNAs. Also deacylates mischarged glycyl-tRNA(Ala), protecting cells against glycine mischarging by AlaRS. Acts via tRNA-based rather than protein-based catalysis; rejects L-amino acids rather than detecting D-amino acids in the active site. By recycling D-aminoacyl-tRNA to D-amino acids and free tRNA molecules, this enzyme counteracts the toxicity associated with the formation of D-aminoacyl-tRNA entities in vivo and helps enforce protein L-homochirality. This is D-aminoacyl-tRNA deacylase from Shewanella woodyi (strain ATCC 51908 / MS32).